Reading from the N-terminus, the 276-residue chain is Putative translation initiation factor eIF-2B subunit 2-like (276 aa).

The protein belongs to the eIF-2B alpha/beta/delta subunits family. As to quaternary structure, complex of two different subunits.

Catalyzes the exchange of initiation factor 2-bound GDP for GTP. The sequence is that of Putative translation initiation factor eIF-2B subunit 2-like from Pyrococcus abyssi (strain GE5 / Orsay).